We begin with the raw amino-acid sequence, 262 residues long: Phosphate import ATP-binding protein PstB (262 aa).

Residues 16–257 (MEARHLSVRY…PSEQRTEDYV (242 aa)) enclose the ABC transporter domain. 48–55 (GPSGCGKS) contacts ATP.

This sequence belongs to the ABC transporter superfamily. Phosphate importer (TC 3.A.1.7) family. In terms of assembly, the complex is composed of two ATP-binding proteins (PstB), two transmembrane proteins (PstC and PstA) and a solute-binding protein (PstS).

It localises to the cell inner membrane. The catalysed reaction is phosphate(out) + ATP + H2O = ADP + 2 phosphate(in) + H(+). Part of the ABC transporter complex PstSACB involved in phosphate import. Responsible for energy coupling to the transport system. In Anaeromyxobacter dehalogenans (strain 2CP-C), this protein is Phosphate import ATP-binding protein PstB.